Consider the following 206-residue polypeptide: Bacteriochlorophyll synthase 23 kDa chain (206 aa).

Its pathway is porphyrin-containing compound metabolism; bacteriochlorophyll biosynthesis (light-independent). In Cereibacter sphaeroides (strain ATCC 17023 / DSM 158 / JCM 6121 / CCUG 31486 / LMG 2827 / NBRC 12203 / NCIMB 8253 / ATH 2.4.1.) (Rhodobacter sphaeroides), this protein is Bacteriochlorophyll synthase 23 kDa chain (bchJ).